The following is a 273-amino-acid chain: Dermonecrotic toxin LapSicTox-alphaIB1b3 (273 aa).

The active site involves His-5. 2 residues coordinate Mg(2+): Glu-25 and Asp-27. The active-site Nucleophile is His-41. Intrachain disulfides connect Cys-45/Cys-51 and Cys-47/Cys-190. Asp-85 serves as a coordination point for Mg(2+). A glycan (N-linked (GlcNAc...) asparagine) is linked at Asn-250.

Belongs to the arthropod phospholipase D family. Class II subfamily. The cofactor is Mg(2+). In terms of tissue distribution, expressed by the venom gland.

It localises to the secreted. The enzyme catalyses an N-(acyl)-sphingosylphosphocholine = an N-(acyl)-sphingosyl-1,3-cyclic phosphate + choline. It catalyses the reaction an N-(acyl)-sphingosylphosphoethanolamine = an N-(acyl)-sphingosyl-1,3-cyclic phosphate + ethanolamine. It carries out the reaction a 1-acyl-sn-glycero-3-phosphocholine = a 1-acyl-sn-glycero-2,3-cyclic phosphate + choline. The catalysed reaction is a 1-acyl-sn-glycero-3-phosphoethanolamine = a 1-acyl-sn-glycero-2,3-cyclic phosphate + ethanolamine. Functionally, dermonecrotic toxins cleave the phosphodiester linkage between the phosphate and headgroup of certain phospholipids (sphingolipid and lysolipid substrates), forming an alcohol (often choline) and a cyclic phosphate. This toxin acts on sphingomyelin (SM). It may also act on ceramide phosphoethanolamine (CPE), lysophosphatidylcholine (LPC) and lysophosphatidylethanolamine (LPE), but not on lysophosphatidylserine (LPS), and lysophosphatidylglycerol (LPG). It acts by transphosphatidylation, releasing exclusively cyclic phosphate products as second products. Induces dermonecrosis, hemolysis, increased vascular permeability, edema, inflammatory response, and platelet aggregation. This Loxosceles apachea (Apache recluse spider) protein is Dermonecrotic toxin LapSicTox-alphaIB1b3.